Here is an 82-residue protein sequence, read N- to C-terminus: Endocuticle structural protein SgAbd-6 (82 aa).

Gln1 bears the Pyrrolidone carboxylic acid mark. Positions 18–82 constitute a Chitin-binding type R&amp;R domain; sequence LGQYTFGFKT…ENGFQPQYTQ (65 aa).

Functionally, component of the abdominal endocuticle. This is Endocuticle structural protein SgAbd-6 from Schistocerca gregaria (Desert locust).